The following is a 138-amino-acid chain: Extracellular glycoprotein lacritin (138 aa).

The signal sequence occupies residues 1 to 19; that stretch reads MKFTTLLFLAAVAGALVYA. Positions 20-79 are disordered; that stretch reads EDASSDSTGADPAQEAGTSKPNEEISGPAEPASPPETTTTAQETSAAAVQGTAKVTSSRQ. The segment covering 43–67 has biased composition (low complexity); sequence EISGPAEPASPPETTTTAQETSAAA. N-linked (GlcNAc...) asparagine glycosylation is present at asparagine 119.

In terms of tissue distribution, expressed in secretory granules of many acinar cells in lacrimal gland and in scattered acinar cells of salivary glands.

Its subcellular location is the secreted. Its function is as follows. Modulates secretion by lacrimal acinar cells. The protein is Extracellular glycoprotein lacritin (LACRT) of Homo sapiens (Human).